The primary structure comprises 274 residues: Bis(5'-nucleosyl)-tetraphosphatase, symmetrical (274 aa).

Belongs to the Ap4A hydrolase family.

The catalysed reaction is P(1),P(4)-bis(5'-adenosyl) tetraphosphate + H2O = 2 ADP + 2 H(+). Its function is as follows. Hydrolyzes diadenosine 5',5'''-P1,P4-tetraphosphate to yield ADP. This Shewanella putrefaciens (strain CN-32 / ATCC BAA-453) protein is Bis(5'-nucleosyl)-tetraphosphatase, symmetrical.